We begin with the raw amino-acid sequence, 238 residues long: tRNA (guanine-N(1)-)-methyltransferase (238 aa).

S-adenosyl-L-methionine is bound by residues Gly-110 and 129-134; that span reads LGDFIL.

This sequence belongs to the RNA methyltransferase TrmD family. Homodimer.

The protein resides in the cytoplasm. The enzyme catalyses guanosine(37) in tRNA + S-adenosyl-L-methionine = N(1)-methylguanosine(37) in tRNA + S-adenosyl-L-homocysteine + H(+). In terms of biological role, specifically methylates guanosine-37 in various tRNAs. In Clostridium botulinum (strain Eklund 17B / Type B), this protein is tRNA (guanine-N(1)-)-methyltransferase.